A 126-amino-acid chain; its full sequence is Aspartate 1-decarboxylase (126 aa).

S25 serves as the catalytic Schiff-base intermediate with substrate; via pyruvic acid. S25 carries the pyruvic acid (Ser) modification. T57 is a binding site for substrate. Y58 functions as the Proton donor in the catalytic mechanism. Position 73–75 (73–75 (GAA)) interacts with substrate.

This sequence belongs to the PanD family. Heterooctamer of four alpha and four beta subunits. Pyruvate serves as cofactor. In terms of processing, is synthesized initially as an inactive proenzyme, which is activated by self-cleavage at a specific serine bond to produce a beta-subunit with a hydroxyl group at its C-terminus and an alpha-subunit with a pyruvoyl group at its N-terminus.

The protein resides in the cytoplasm. It catalyses the reaction L-aspartate + H(+) = beta-alanine + CO2. The protein operates within cofactor biosynthesis; (R)-pantothenate biosynthesis; beta-alanine from L-aspartate: step 1/1. In terms of biological role, catalyzes the pyruvoyl-dependent decarboxylation of aspartate to produce beta-alanine. This is Aspartate 1-decarboxylase from Sodalis glossinidius (strain morsitans).